A 171-amino-acid polypeptide reads, in one-letter code: Disulfide bond formation protein B (171 aa).

Topologically, residues 1–10 (MQRLLTYRAL) are cytoplasmic. Residues 11 to 27 (NFILFIASVVAMLFAII) traverse the membrane as a helical segment. Residues 28 to 46 (FLQNYKGLEPCPLCIFQRI) are Periplasmic-facing. The cysteines at positions 38 and 41 are disulfide-linked. A helical transmembrane segment spans residues 47–63 (GLMVMGGFSLIAAVGHP). Residues 64-70 (KKMGMQL) lie on the Cytoplasmic side of the membrane. The helical transmembrane segment at 71-88 (LLWIGSMAGILWSAGVAA) threads the bilayer. Topologically, residues 89-145 (RHVWIQHLPADQVPACGPGLDYFLEALPMKQVINQVLSGSGECAEISWRFLGLSIPE) are periplasmic. The cysteines at positions 104 and 131 are disulfide-linked. The helical transmembrane segment at 146–164 (QALILFTALILVNLLVLWR) threads the bilayer. The Cytoplasmic portion of the chain corresponds to 165–171 (IISKRTA).

Belongs to the DsbB family.

It localises to the cell inner membrane. Functionally, required for disulfide bond formation in some periplasmic proteins. Acts by oxidizing the DsbA protein. The chain is Disulfide bond formation protein B from Psychrobacter sp. (strain PRwf-1).